The primary structure comprises 284 residues: Tropomyosin Per a 7.0103 (284 aa).

Residues 1–266 (MDAIKKKMQA…EDELVHEKEK (266 aa)) are a coiled coil.

The protein belongs to the tropomyosin family. As to quaternary structure, homodimer.

Functionally, tropomyosin, in association with the troponin complex, plays a central role in the calcium dependent regulation of muscle contraction. The protein is Tropomyosin Per a 7.0103 of Periplaneta americana (American cockroach).